Consider the following 426-residue polypeptide: Glucose-6-phosphate isomerase (426 aa).

The active-site Proton donor is the Glu276. Catalysis depends on residues His297 and Lys413.

Belongs to the GPI family.

It localises to the cytoplasm. The enzyme catalyses alpha-D-glucose 6-phosphate = beta-D-fructose 6-phosphate. It functions in the pathway carbohydrate biosynthesis; gluconeogenesis. Its pathway is carbohydrate degradation; glycolysis; D-glyceraldehyde 3-phosphate and glycerone phosphate from D-glucose: step 2/4. Catalyzes the reversible isomerization of glucose-6-phosphate to fructose-6-phosphate. The chain is Glucose-6-phosphate isomerase from Mesoplasma florum (strain ATCC 33453 / NBRC 100688 / NCTC 11704 / L1) (Acholeplasma florum).